The following is a 184-amino-acid chain: Interferon alpha-1 (184 aa).

The signal sequence occupies residues 1-23 (MALPVSLLMALVVLSCHSICSLG). Intrachain disulfides connect cysteine 24-cysteine 122 and cysteine 52-cysteine 162.

The protein belongs to the alpha/beta interferon family. In terms of assembly, interacts with CR2.

The protein localises to the secreted. In terms of biological role, produced by macrophages, IFN-alpha have antiviral activities. Interferon stimulates the production of two enzymes: a protein kinase and an oligoadenylate synthetase. This is Interferon alpha-1 from Equus caballus (Horse).